The chain runs to 302 residues: Recombination-associated protein RdgC (302 aa).

It belongs to the RdgC family.

The protein resides in the cytoplasm. It is found in the nucleoid. Its function is as follows. May be involved in recombination. The protein is Recombination-associated protein RdgC of Psychromonas ingrahamii (strain DSM 17664 / CCUG 51855 / 37).